Consider the following 176-residue polypeptide: Scytalone dehydratase-like protein AacuK (176 aa).

Substrate contacts are provided by Y26 and Y46. Catalysis depends on residues H81 and H107.

The protein belongs to the scytalone dehydratase family.

It functions in the pathway secondary metabolite biosynthesis. In terms of biological role, scytalone dehydratase-like protein; part of the gene cluster that mediates the biosynthesis of the tetrahydroxanthone dimer secalonic acid D. The pathway begins with the synthesis of atrochrysone thioester by the polyketide synthase AacuL. The atrochrysone carboxyl ACP thioesterase AacuM then breaks the thioester bond and releases the atrochrysone carboxylic acid from AacuL. Atrochrysone carboxylic acid is decarboxylated by the decarboxylase AacuI, and oxidized by the anthrone oxygenase AacuG to yield emodin. Emodin is then reduced to emodin hydroquinone by a yet unidentified oxidoreductase. A-ring reduction by the short chain dehydrogenase AacuN, dehydration by the scytalone dehydratase-like protein AacuK and probable spontaneous re-oxidation, results in overall deoxygenation to chrysophanol. Baeyer-Villiger oxidation by the Baeyer-Villiger monooxygenase (BVMO) AacuH then yields monodictyphenone. Monodictyphenone is transformed into compounds with the tetrahydroxanthone skeleton via methylesterification by the methyltransferase AacuQ, followed by the action of the flavin-dependent monooxygenase AacuC, the isomerase AacuP, and the short chain dehydrogenase/reductase AacuF or AacuD. AacuF and AacuD should accept the same compound as a substrate but perform the ketoreduction with a different stereoselectivity, thus yielding blennolides B and A, respectively. In the final step of the biosynthesis, the cytochrome P450 monooxygenase AacuE accepts blennolide B and/or blennolide A to conduct the dimerization reaction to furnish the tetrahydroxanthone dimers, secalonic acids D, B, and F. This Aspergillus aculeatus (strain ATCC 16872 / CBS 172.66 / WB 5094) protein is Scytalone dehydratase-like protein AacuK.